The sequence spans 355 residues: 3-dehydroquinate synthase (355 aa).

Residues Glu-71–Lys-76, Gly-105–Asp-109, Thr-129–Ser-130, Lys-142, and Lys-151 contribute to the NAD(+) site. Positions 184, 246, and 263 each coordinate Zn(2+).

It belongs to the sugar phosphate cyclases superfamily. Dehydroquinate synthase family. The cofactor is Co(2+). Zn(2+) serves as cofactor. It depends on NAD(+) as a cofactor.

It localises to the cytoplasm. The catalysed reaction is 7-phospho-2-dehydro-3-deoxy-D-arabino-heptonate = 3-dehydroquinate + phosphate. Its pathway is metabolic intermediate biosynthesis; chorismate biosynthesis; chorismate from D-erythrose 4-phosphate and phosphoenolpyruvate: step 2/7. In terms of biological role, catalyzes the conversion of 3-deoxy-D-arabino-heptulosonate 7-phosphate (DAHP) to dehydroquinate (DHQ). The polypeptide is 3-dehydroquinate synthase (Streptococcus pneumoniae (strain Hungary19A-6)).